A 311-amino-acid chain; its full sequence is ATP synthase subunit gamma, mitochondrial (311 aa).

The N-terminal 33 residues, 1–33 (MLSRIVSNNATRSVMCHQAQVGILYKTNPVRTY), are a transit peptide targeting the mitochondrion.

This sequence belongs to the ATPase gamma chain family. As to quaternary structure, F-type ATPases have 2 components, CF(1) - the catalytic core - and CF(0) - the membrane proton channel. CF(1) has five subunits: alpha(3), beta(3), gamma(1), delta(1), epsilon(1). CF(0) has three main subunits: a, b and c.

The protein localises to the mitochondrion. Its subcellular location is the mitochondrion inner membrane. Its function is as follows. Mitochondrial membrane ATP synthase (F(1)F(0) ATP synthase or Complex V) produces ATP from ADP in the presence of a proton gradient across the membrane which is generated by electron transport complexes of the respiratory chain. F-type ATPases consist of two structural domains, F(1) - containing the extramembraneous catalytic core, and F(0) - containing the membrane proton channel, linked together by a central stalk and a peripheral stalk. During catalysis, ATP synthesis in the catalytic domain of F(1) is coupled via a rotary mechanism of the central stalk subunits to proton translocation. Part of the complex F(1) domain and the central stalk which is part of the complex rotary element. The gamma subunit protrudes into the catalytic domain formed of alpha(3)beta(3). Rotation of the central stalk against the surrounding alpha(3)beta(3) subunits leads to hydrolysis of ATP in three separate catalytic sites on the beta subunits. The polypeptide is ATP synthase subunit gamma, mitochondrial (ATP3) (Saccharomyces cerevisiae (strain ATCC 204508 / S288c) (Baker's yeast)).